A 400-amino-acid chain; its full sequence is Glycine betaine/proline betaine transport system ATP-binding protein ProV (400 aa).

The region spanning 29 to 265 (LSKEQILEKT…PANDYVRTFF (237 aa)) is the ABC transporter domain. An ATP-binding site is contributed by 61–68 (GLSGSGKS). CBS domains follow at residues 280–341 (ARRS…GIEA) and 343–400 (LIDD…GNNG).

The protein belongs to the ABC transporter superfamily. The complex is composed of two ATP-binding proteins (ProV), two transmembrane proteins (ProW) and a solute-binding protein (ProX).

It localises to the cell inner membrane. In terms of biological role, part of the ProU ABC transporter complex involved in glycine betaine and proline betaine uptake. Probably responsible for energy coupling to the transport system. The sequence is that of Glycine betaine/proline betaine transport system ATP-binding protein ProV from Salmonella typhimurium (strain LT2 / SGSC1412 / ATCC 700720).